The primary structure comprises 451 residues: Subtilase-type proteinase psp3 (451 aa).

The N-terminal stretch at Met1–Ala20 is a signal peptide. The Inhibitor I9 domain occupies Tyr80–Val161. The region spanning Pro169 to Glu451 is the Peptidase S8 domain. Catalysis depends on charge relay system residues Asp205, His237, and Ser394.

This sequence belongs to the peptidase S8 family.

The chain is Subtilase-type proteinase psp3 (psp3) from Schizosaccharomyces pombe (strain 972 / ATCC 24843) (Fission yeast).